The sequence spans 254 residues: Phosphoglycerate mutase 1 (254 aa).

Substrate-binding positions include R10–N17 and S23–G24. H11 (tele-phosphohistidine intermediate) is an active-site residue. S14 and S23 each carry phosphoserine. Position 26 is a phosphotyrosine (Y26). S31 carries the post-translational modification Phosphoserine. Residues R62, E89–Y92, and K100 contribute to the substrate site. The Proton donor/acceptor role is filled by E89. Position 106 is an N6-acetyllysine (K106). R116 to R117 lines the substrate pocket. S118 bears the Phosphoserine mark. G187–N188 provides a ligand contact to substrate. K251 carries the post-translational modification N6-acetyllysine; alternate. K251 bears the N6-succinyllysine; alternate mark. K253 and K254 each carry N6-acetyllysine.

The protein belongs to the phosphoglycerate mutase family. BPG-dependent PGAM subfamily. In terms of assembly, homodimer. Acetylated at Lys-253, Lys-253 and Lys-254 under high glucose condition. Acetylation increases catalytic activity. Under glucose restriction SIRT1 levels dramatically increase and it deacetylates the enzyme.

The enzyme catalyses (2R)-2-phosphoglycerate = (2R)-3-phosphoglycerate. The catalysed reaction is (2R)-3-phospho-glyceroyl phosphate = (2R)-2,3-bisphosphoglycerate + H(+). Its function is as follows. Catalyzes the interconversion of 2-phosphoglycerate and 3-phosphoglyceratea crucial step in glycolysis, by using 2,3-bisphosphoglycerate. Also catalyzes the interconversion of (2R)-2,3-bisphosphoglycerate and (2R)-3-phospho-glyceroyl phosphate. This chain is Phosphoglycerate mutase 1, found in Mus musculus (Mouse).